Here is a 321-residue protein sequence, read N- to C-terminus: Ribose-phosphate pyrophosphokinase (321 aa).

ATP-binding positions include 44-46 (DGE) and 103-104 (RQ). Mg(2+) contacts are provided by His-137 and Asp-179. Lys-202 is a catalytic residue. D-ribose 5-phosphate-binding positions include Arg-204, Asp-228, and 232-236 (DTAGT).

Belongs to the ribose-phosphate pyrophosphokinase family. Class I subfamily. In terms of assembly, homohexamer. Mg(2+) is required as a cofactor.

The protein resides in the cytoplasm. It carries out the reaction D-ribose 5-phosphate + ATP = 5-phospho-alpha-D-ribose 1-diphosphate + AMP + H(+). The protein operates within metabolic intermediate biosynthesis; 5-phospho-alpha-D-ribose 1-diphosphate biosynthesis; 5-phospho-alpha-D-ribose 1-diphosphate from D-ribose 5-phosphate (route I): step 1/1. In terms of biological role, involved in the biosynthesis of the central metabolite phospho-alpha-D-ribosyl-1-pyrophosphate (PRPP) via the transfer of pyrophosphoryl group from ATP to 1-hydroxyl of ribose-5-phosphate (Rib-5-P). The protein is Ribose-phosphate pyrophosphokinase of Staphylococcus saprophyticus subsp. saprophyticus (strain ATCC 15305 / DSM 20229 / NCIMB 8711 / NCTC 7292 / S-41).